A 415-amino-acid polypeptide reads, in one-letter code: Phosphoglycerate kinase (415 aa).

Positions 22, 23, 24, 25, 37, 38, 61, 62, 64, 120, 121, 168, and 169 each coordinate (2R)-3-phosphoglycerate. Gly-212 is a binding site for ADP. Gly-212 contributes to the CDP binding site. AMP is bound by residues Ala-213 and Lys-214. Ala-213 contributes to the ATP binding site. Mg(2+) is bound at residue Ala-213. Asp-217 contributes to the CDP binding site. Asp-217 contacts Mg(2+). Lys-218 is a binding site for AMP. Lys-218 lines the ATP pocket. Gly-236 contacts ADP. Gly-236 is a CDP binding site. Residues Gly-237 and Gly-311 each coordinate AMP. 2 residues coordinate ATP: Gly-237 and Gly-311. The CDP site is built by Gly-336 and Phe-341. Phe-341 contributes to the ADP binding site. Residue Glu-342 coordinates AMP. Residues Glu-342, Asp-373, and Thr-374 each coordinate ATP. Position 373 (Asp-373) interacts with Mg(2+).

This sequence belongs to the phosphoglycerate kinase family. As to quaternary structure, monomer. The cofactor is Mg(2+).

The protein localises to the cytoplasm. It carries out the reaction (2R)-3-phosphoglycerate + ATP = (2R)-3-phospho-glyceroyl phosphate + ADP. It functions in the pathway carbohydrate degradation; glycolysis; pyruvate from D-glyceraldehyde 3-phosphate: step 2/5. This Opisthorchis sinensis (Clonorchis sinensis) protein is Phosphoglycerate kinase (PGK).